The following is a 93-amino-acid chain: Small ribosomal subunit protein uS15 (93 aa).

Belongs to the universal ribosomal protein uS15 family. As to quaternary structure, part of the 30S ribosomal subunit. Forms a bridge to the 50S subunit in the 70S ribosome, contacting the 23S rRNA.

One of the primary rRNA binding proteins, it binds directly to 16S rRNA where it helps nucleate assembly of the platform of the 30S subunit by binding and bridging several RNA helices of the 16S rRNA. Its function is as follows. Forms an intersubunit bridge (bridge B4) with the 23S rRNA of the 50S subunit in the ribosome. This chain is Small ribosomal subunit protein uS15, found in Ehrlichia chaffeensis (strain ATCC CRL-10679 / Arkansas).